The sequence spans 187 residues: Cell division protein SepF (187 aa).

Residues 21-97 (EVEVPDKQQQ…ATPNNASQES (77 aa)) are disordered. 2 stretches are compositionally biased toward polar residues: residues 38 to 63 (EQSQ…YTTT) and 70 to 97 (RMSN…SQES).

The protein belongs to the SepF family. In terms of assembly, homodimer. Interacts with FtsZ.

It is found in the cytoplasm. In terms of biological role, cell division protein that is part of the divisome complex and is recruited early to the Z-ring. Probably stimulates Z-ring formation, perhaps through the cross-linking of FtsZ protofilaments. Its function overlaps with FtsA. The protein is Cell division protein SepF of Staphylococcus aureus (strain Mu3 / ATCC 700698).